Consider the following 504-residue polypeptide: Maturase K (504 aa).

The protein belongs to the intron maturase 2 family. MatK subfamily.

It localises to the plastid. The protein resides in the chloroplast. Functionally, usually encoded in the trnK tRNA gene intron. Probably assists in splicing its own and other chloroplast group II introns. The protein is Maturase K of Lupinus argenteus (Silvery lupine).